We begin with the raw amino-acid sequence, 146 residues long: Cytochrome c-type biogenesis protein CcmE (146 aa).

Topologically, residues 1–7 (MQAKHQR) are cytoplasmic. A helical; Signal-anchor for type II membrane protein transmembrane segment spans residues 8–28 (LILGIIALAAVIAAGFLALVA). Residues 29–146 (FKKQAAYFFT…AATQTTLQEK (118 aa)) lie on the Periplasmic side of the membrane. Heme is bound by residues His123 and Tyr127.

The protein belongs to the CcmE/CycJ family.

Its subcellular location is the cell inner membrane. In terms of biological role, heme chaperone required for the biogenesis of c-type cytochromes. Transiently binds heme delivered by CcmC and transfers the heme to apo-cytochromes in a process facilitated by CcmF and CcmH. This chain is Cytochrome c-type biogenesis protein CcmE, found in Zymomonas mobilis subsp. mobilis (strain ATCC 31821 / ZM4 / CP4).